We begin with the raw amino-acid sequence, 458 residues long: ATP synthase subunit beta (458 aa).

Residue 148-155 (GGAGVGKT) coordinates ATP.

Belongs to the ATPase alpha/beta chains family. As to quaternary structure, F-type ATPases have 2 components, CF(1) - the catalytic core - and CF(0) - the membrane proton channel. CF(1) has five subunits: alpha(3), beta(3), gamma(1), delta(1), epsilon(1). CF(0) has three main subunits: a(1), b(2) and c(9-12). The alpha and beta chains form an alternating ring which encloses part of the gamma chain. CF(1) is attached to CF(0) by a central stalk formed by the gamma and epsilon chains, while a peripheral stalk is formed by the delta and b chains.

It localises to the cell inner membrane. It catalyses the reaction ATP + H2O + 4 H(+)(in) = ADP + phosphate + 5 H(+)(out). Functionally, produces ATP from ADP in the presence of a proton gradient across the membrane. The catalytic sites are hosted primarily by the beta subunits. In Pseudomonas putida (strain ATCC 700007 / DSM 6899 / JCM 31910 / BCRC 17059 / LMG 24140 / F1), this protein is ATP synthase subunit beta.